A 111-amino-acid polypeptide reads, in one-letter code: STFABAPPGBPAKGAKIFKAKCAZCHTVBAGAGHKQGPNLNGAFGRTSGTAAGFSYSAABKBKTADWBZBTLYDYLLNPKKYIPGTKMVFAGLKKPZBRADLIAFLKDATA.

S1 carries the post-translational modification N-acetylserine. Heme c contacts are provided by C22, C25, and H26. N6,N6,N6-trimethyllysine is present on K80. M88 contributes to the heme c binding site.

The protein belongs to the cytochrome c family. Post-translationally, binds 1 heme c group covalently per subunit.

Its subcellular location is the mitochondrion intermembrane space. Functionally, electron carrier protein. The oxidized form of the cytochrome c heme group can accept an electron from the heme group of the cytochrome c1 subunit of cytochrome reductase. Cytochrome c then transfers this electron to the cytochrome oxidase complex, the final protein carrier in the mitochondrial electron-transport chain. The protein is Cytochrome c of Ulva intestinalis (Hollow green nori).